Here is an 813-residue protein sequence, read N- to C-terminus: Microtubule-associated protein 6 (813 aa).

Residues Cys-5, Cys-10, and Cys-11 are each lipidated (S-palmitoyl cysteine). Disordered stretches follow at residues 36–283 (ATEH…AAAD), 314–651 (VKPI…KDES), and 756–813 (PLKD…ESSP). A compositionally biased stretch (pro residues) spans 41-50 (GAPPQPPPPQ). The span at 51–62 (QQAQPALAPPSA) shows a compositional bias: low complexity. The span at 100–112 (GRSGPGPGLGSGS) shows a compositional bias: gly residues. The residue at position 102 (Ser-102) is a Phosphoserine. The interval 118–141 (DSVMRQDYRAWKVQRPEPSCRPRS) is mn 1. A compositionally biased stretch (basic and acidic residues) spans 121–141 (MRQDYRAWKVQRPEPSCRPRS). A calmodulin-binding region spans residues 126 to 140 (RAWKVQRPEPSCRPR). Position 143 is a phosphotyrosine (Tyr-143). The span at 149–173 (PFERETQYQKDFRAWPLPRRGDHPW) shows a compositional bias: basic and acidic residues. Residues 153 to 176 (ETQYQKDFRAWPLPRRGDHPWIPK) are mn 2. The segment at 162 to 176 (AWPLPRRGDHPWIPK) is calmodulin-binding. Residue Ser-187 is modified to Phosphoserine. Calmodulin-binding stretches follow at residues 189–203 (PILG…SQER), 306–320 (RAWT…IKAK), 357–371 (RRRI…FKEP), and 384–398 (PKKT…RKAK). Positions 298-321 (SSSYRNEFRAWTDIKPVKPIKAKP) are mn 3. The segment covering 367–376 (PFKEPPKVEK) has biased composition (basic and acidic residues). Positions 383-398 (KPKKTSASHKPTRKAK) are enriched in basic residues. Basic and acidic residues predominate over residues 420 to 439 (KPDDKEQSKEMNNKLAEAKE). Positions 443–454 (QPVSDSSKTQGP) are enriched in polar residues. Residues 637–651 (KDQDPMVPEHPKDES) are compositionally biased toward basic and acidic residues. Ser-812 carries the post-translational modification Phosphoserine.

It belongs to the STOP family. In terms of assembly, interacts with calmodulin (via C-terminus); the interaction is dependent on Ca(2+). Interacts (via C-terminus) with TMEM106B (via N-terminus). Interacts with ZDHHC17 (via ANK repeats). Interacts with ZDHHC13 (via ANK repeats). Post-translationally, palmitoylated. Probably depalmitoylated by ABHD17A, ABHD17B and ABHD17C. During neuronal polarization, palmitoylation and depalmitoylation cycles regulate MAP6 shuttling between secretory vesicles and microtubules, and its polarized distribution in the axon. Expressed in brain (at protein level). Expressed in spinal cord. Isoform 2 expression is up-regulated in the prefrontal cortex (Brodmann's area 46) of patients with schizophrenia (postmortem brain study).

The protein resides in the cytoplasm. It localises to the cytoskeleton. Its subcellular location is the golgi apparatus. The protein localises to the cell projection. It is found in the axon. The protein resides in the dendrite. It localises to the cytoplasmic vesicle. Its subcellular location is the secretory vesicle membrane. Involved in microtubule stabilization in many cell types, including neuronal cells. Specifically has microtubule cold stabilizing activity. Involved in dendrite morphogenesis and maintenance by regulating lysosomal trafficking via its interaction with TMEM106B. Regulates KIF5A-mediated axonal cargo transport. Regulates axonal growth during neuron polarization. This chain is Microtubule-associated protein 6 (MAP6), found in Homo sapiens (Human).